We begin with the raw amino-acid sequence, 170 residues long: MPFMHGSMPLRRTFFYLQQGKVKLRDNVNVFSMGFHKNPTPEQSGARDFVYWNWAQLQYHNPKVQLVKHADKVVTPFARAYLNDGREVLFDLDGMKREEIEKLLAKTLGKTELVERREHLESIAKLNPADFGSKNERQCMCEVQGQHPCTGLLRAPQCVTGKYRWNHNLI.

This sequence belongs to the mitochondrion-specific ribosomal protein mS25 family. As to quaternary structure, component of the mitochondrial ribosome small subunit (28S) which comprises a 12S rRNA and about 30 distinct proteins.

It is found in the mitochondrion. The sequence is that of Small ribosomal subunit protein mS25 (mrps-25) from Caenorhabditis elegans.